We begin with the raw amino-acid sequence, 340 residues long: MTEQQPIAVLGGGSFGTAIANLLAENGQAVRQWMRDPEQAEAIRSRRENPRYLKGVKVHPGVEPVTDLERTLADCQLIFVALPSSALRKVLQPHQLALTDKLLVSLTKGIEAHTFKLMSEILEEIAPQARIGVISGPNLAREIAEHELTATVVASEDDELCARVQAALHGRTFRVYASRDRFGVELGGALKNVYAIMAGLAAAMDMGENTRSMLITRALAEMTRFAVKLGANPMTFLGLAGVGDLIVTCSSPKSRNYQVGHALGEGLSLEQAVSRLGETAEGVNTLRVLKEKSDEMQVYMPLVAGLHAILFEGRTLAQVIQLLMRGEPKTDVDFIPTTGF.

Positions 14, 15, 35, and 108 each coordinate NADPH. Residues Lys-108 and Gly-136 each contribute to the sn-glycerol 3-phosphate site. Residue Ala-140 coordinates NADPH. The sn-glycerol 3-phosphate site is built by Lys-191, Asp-244, Ser-254, Arg-255, and Asn-256. Lys-191 (proton acceptor) is an active-site residue. Arg-255 contributes to the NADPH binding site. Glu-281 contacts NADPH.

It belongs to the NAD-dependent glycerol-3-phosphate dehydrogenase family.

The protein resides in the cytoplasm. It catalyses the reaction sn-glycerol 3-phosphate + NAD(+) = dihydroxyacetone phosphate + NADH + H(+). The catalysed reaction is sn-glycerol 3-phosphate + NADP(+) = dihydroxyacetone phosphate + NADPH + H(+). It participates in membrane lipid metabolism; glycerophospholipid metabolism. Its function is as follows. Catalyzes the reduction of the glycolytic intermediate dihydroxyacetone phosphate (DHAP) to sn-glycerol 3-phosphate (G3P), the key precursor for phospholipid synthesis. The protein is Glycerol-3-phosphate dehydrogenase [NAD(P)+] of Pseudomonas paraeruginosa (strain DSM 24068 / PA7) (Pseudomonas aeruginosa (strain PA7)).